The chain runs to 506 residues: MRIWFWLAILVFRWWNALWVKTFFQPDEFYQSLEVAHHFIFRYGFLTWEWTSAIRSALHPLIFAALYRVLQVLKLDSSYFVFTNAPKLLQGTFAAILDYGTYKFALVRYGSKTANWTLACSLVSIMNAYVGVRTFSNSLETTLTSIGFYYFSYYLKYENSSPEQRKKAYSSLLGFISVAAFACFIRPTNILVWIFPLLFWNKNPQTPIKDLLSFSNVFNRFRFLYALGYGRLFGIFVLCVSLFLVNIIADRILYGRFVFPIISFFQFNVTSGLSSLYGLNAWHYYLSQALPLICGGFLPFVLLTMDLQTAGTILCVFFPYSLIGHKELRFVYPISPILLTLAGKFFSSFSSWKRAARFFFLIGLGHALVITFLCRFHQFGVMEVMPLIHSLAEKNQTGLILAPCHTTPWQSHIHSPFAENGWKFLTCEPFEKPFDETDRFYENMPTFLDKIKEWPDYLIFFEERFYSLYSYLDSRGLKYEEVQRYYNSLIPESRERAGALLVYKKL.

N-linked (GlcNAc...) asparagine glycosylation is present at asparagine 115. 6 helical membrane-spanning segments follow: residues 180-200 (AFAC…LLFW), 229-249 (YGRL…NIIA), 257-277 (FVFP…SSLY), 285-305 (YLSQ…LLTM), 330-350 (FVYP…SSFS), and 358-378 (FFFL…RFHQ). N-linked (GlcNAc...) asparagine glycosylation is present at asparagine 395.

This sequence belongs to the glycosyltransferase 22 family. PIGB subfamily.

It is found in the endoplasmic reticulum membrane. Its pathway is glycolipid biosynthesis; glycosylphosphatidylinositol-anchor biosynthesis. In terms of biological role, mannosyltransferase involved in glycosylphosphatidylinositol-anchor biosynthesis. Transfers the third mannose to Man2-GlcN-acyl-PI during GPI precursor assembly. The chain is GPI mannosyltransferase 3 (gpi10) from Schizosaccharomyces pombe (strain 972 / ATCC 24843) (Fission yeast).